Reading from the N-terminus, the 373-residue chain is tRNA-specific 2-thiouridylase MnmA (373 aa).

Residues Gly12–Ser19 and Met38 contribute to the ATP site. Positions Asn98 to Asp100 are interaction with target base in tRNA. The active-site Nucleophile is Cys103. Cys103 and Cys200 are oxidised to a cystine. Gly127 lines the ATP pocket. An interaction with tRNA region spans residues Lys150 to Gln152. The Cysteine persulfide intermediate role is filled by Cys200. The interval Arg312–Tyr313 is interaction with tRNA.

Belongs to the MnmA/TRMU family.

The protein localises to the cytoplasm. The catalysed reaction is S-sulfanyl-L-cysteinyl-[protein] + uridine(34) in tRNA + AH2 + ATP = 2-thiouridine(34) in tRNA + L-cysteinyl-[protein] + A + AMP + diphosphate + H(+). Functionally, catalyzes the 2-thiolation of uridine at the wobble position (U34) of tRNA, leading to the formation of s(2)U34. The chain is tRNA-specific 2-thiouridylase MnmA from Streptococcus pyogenes serotype M2 (strain MGAS10270).